The chain runs to 183 residues: Segregation and condensation protein B (183 aa).

It belongs to the ScpB family. Homodimer. Homodimerization may be required to stabilize the binding of ScpA to the Smc head domains. Component of a cohesin-like complex composed of ScpA, ScpB and the Smc homodimer, in which ScpA and ScpB bind to the head domain of Smc. The presence of the three proteins is required for the association of the complex with DNA.

The protein localises to the cytoplasm. In terms of biological role, participates in chromosomal partition during cell division. May act via the formation of a condensin-like complex containing Smc and ScpA that pull DNA away from mid-cell into both cell halves. This is Segregation and condensation protein B from Streptococcus pyogenes serotype M12 (strain MGAS2096).